The chain runs to 181 residues: Ribosome maturation factor RimM (181 aa).

Positions 99 to 172 (EDEFYQVDLI…FLIVDPMAAG (74 aa)) constitute a PRC barrel domain.

It belongs to the RimM family. Binds ribosomal protein uS19.

Its subcellular location is the cytoplasm. An accessory protein needed during the final step in the assembly of 30S ribosomal subunit, possibly for assembly of the head region. Essential for efficient processing of 16S rRNA. May be needed both before and after RbfA during the maturation of 16S rRNA. It has affinity for free ribosomal 30S subunits but not for 70S ribosomes. The chain is Ribosome maturation factor RimM from Bartonella tribocorum (strain CIP 105476 / IBS 506).